Consider the following 153-residue polypeptide: Facilitator of iron transport 2 (153 aa).

Residues 1 to 18 form the signal peptide; the sequence is MKFSTIFGATTVMTAVSA. The segment at 73 to 98 is disordered; sequence TEGPDTTSEKSTTKTLTLTNGSGSST. The segment covering 85 to 98 has biased composition (low complexity); that stretch reads TKTLTLTNGSGSST. Asn-92 carries N-linked (GlcNAc...) asparagine glycosylation. Residue Gly-130 is the site of GPI-anchor amidated glycine attachment. The propeptide at 131 to 153 is removed in mature form; it reads AAPAAFQGASVGALALGLISYLL.

The GPI-anchor is attached to the protein in the endoplasmic reticulum and serves to target the protein to the cell surface. There, the glucosamine-inositol phospholipid moiety is cleaved off and the GPI-modified mannoprotein is covalently attached via its lipidless GPI glycan remnant to the 1,6-beta-glucan of the outer cell wall layer.

It localises to the secreted. Its subcellular location is the cell wall. It is found in the membrane. Functionally, involved in the uptake of non-siderophore and siderophore sources of iron. Has a role in the retention of iron in the cell wall and periplasmic space. In Saccharomyces cerevisiae (strain ATCC 204508 / S288c) (Baker's yeast), this protein is Facilitator of iron transport 2 (FIT2).